A 956-amino-acid chain; its full sequence is MAEKPEVLDAVLKETVDLENIPIEEVFENLRCTREGLTATAAQERLSIFGYNKLEEKKESKFLKFLGFMWNPLSWVMEAAAIMAIALANGGGKPPDWQDFVGIITLLIINSTISFIEENNAGNAAAALMARLAPKAKVLRDGKWDEEDASVLVPGDIISIKLGDIIPADARLLEGDPLKIDQSALTGESLPVTKGPGDGVYSGSTCKQGEIEAVVIATGVHTFFGKAAHLVDSTNQVGHFQKVLTAIGNFCICSIAVGMIIEIIVMYPIQHRKYRPGIDNLLVLLIGGIPIAMPTVLSVTMAIGSHRLAQQGAITKRMTAIEEMAGMDVLCSDKTGTLTLNKLTVDKALIEVFAKGIDADTVVLMAARASRIENQDAIDTAIVGMLADPKEARAGIREIHFLPFNPTDKRTALTYLDGEGKMHRVSKGAPEQILNLAHNKSDIERRVHTVIDKFAERGLRSLGVAYQEVPEGRKESAGGPWQFIALLPLFDPPRHDSAETIRRALNLGVNVKMITGDQLAIGKETGRRLGMGTNMYPSSALLGQTKDESIAALPIDELIEKADGFAGVFPEHKYEIVKRLQARKHICGMTGDGVNDAPALKKADIGIAVDDATDAARSASDIVLTEPGLSVIISAVLTSRAIFQRMKNYTIYAVSITIRIVLGFMLLALIWKFDFPPFMVLIIAILNDGTIMTISKDRVKPSPLPDSWKLAEIFTTGVVLGGYLAMMTVIFFWAAYKTNFFPRIFGVSTLEKTATDDFRKLASAIYLQVSTISQALIFVTRSRSWSFVERPGLLLVFAFFVAQLVATLIAVYANWSFAAIEGIGWGWAGVIWLYNIVTYIPLDLIKFLIRYALSGKAWDLVLEQRIAFTRKKDFGKELRELQWAHAQRTLHGLQVPDPKIFSETTNFNELNQLAEEAKRRAEIARLRELHTLKGHVESVVKLKGLDIETIQQSYTV.

Topologically, residues 1–65 (MAEKPEVLDA…EKKESKFLKF (65 aa)) are cytoplasmic. A helical membrane pass occupies residues 66–85 (LGFMWNPLSWVMEAAAIMAI). At 86–97 (ALANGGGKPPDW) the chain is on the extracellular side. The helical transmembrane segment at 98 to 118 (QDFVGIITLLIINSTISFIEE) threads the bilayer. Residues 119-247 (NNAGNAAAAL…GHFQKVLTAI (129 aa)) lie on the Cytoplasmic side of the membrane. A helical membrane pass occupies residues 248–268 (GNFCICSIAVGMIIEIIVMYP). Topologically, residues 269 to 277 (IQHRKYRPG) are extracellular. A helical transmembrane segment spans residues 278 to 295 (IDNLLVLLIGGIPIAMPT). Topologically, residues 296-646 (VLSVTMAIGS…LTSRAIFQRM (351 aa)) are cytoplasmic. The 4-aspartylphosphate intermediate role is filled by D333. D592 and D596 together coordinate Mg(2+). The chain crosses the membrane as a helical span at residues 647-666 (KNYTIYAVSITIRIVLGFML). Residues 667-674 (LALIWKFD) lie on the Extracellular side of the membrane. The chain crosses the membrane as a helical span at residues 675–697 (FPPFMVLIIAILNDGTIMTISKD). The Cytoplasmic segment spans residues 698–713 (RVKPSPLPDSWKLAEI). Residues 714–734 (FTTGVVLGGYLAMMTVIFFWA) traverse the membrane as a helical segment. Topologically, residues 735-759 (AYKTNFFPRIFGVSTLEKTATDDFR) are extracellular. A helical transmembrane segment spans residues 760–780 (KLASAIYLQVSTISQALIFVT). The Cytoplasmic portion of the chain corresponds to 781-792 (RSRSWSFVERPG). Residues 793–813 (LLLVFAFFVAQLVATLIAVYA) traverse the membrane as a helical segment. Residues 814-821 (NWSFAAIE) are Extracellular-facing. A helical transmembrane segment spans residues 822–842 (GIGWGWAGVIWLYNIVTYIPL). The Cytoplasmic portion of the chain corresponds to 843 to 956 (DLIKFLIRYA…IETIQQSYTV (114 aa)).

The protein belongs to the cation transport ATPase (P-type) (TC 3.A.3) family. Type IIIA subfamily. As to quaternary structure, possibly exists as a homodimer or a homotrimer.

The protein localises to the cell membrane. The catalysed reaction is ATP + H2O + H(+)(in) = ADP + phosphate + 2 H(+)(out). In terms of biological role, the plasma membrane ATPase of plants and fungi is a hydrogen ion pump. The proton gradient it generates drives the active transport of nutrients by H(+)-symport. The resulting external acidification and/or internal alkinization may mediate growth responses. This is Plasma membrane ATPase 1 (LHA1) from Solanum lycopersicum (Tomato).